The chain runs to 260 residues: Octanoyltransferase (260 aa).

The 200-residue stretch at 42-241 (PQVPDGLLLL…SFCQVFGLQA (200 aa)) folds into the BPL/LPL catalytic domain. Substrate-binding positions include 97–104 (RGGEVTYH), 172–174 (AIG), and 185–187 (GFA). The active-site Acyl-thioester intermediate is the cysteine 203.

Belongs to the LipB family.

The protein resides in the cytoplasm. The enzyme catalyses octanoyl-[ACP] + L-lysyl-[protein] = N(6)-octanoyl-L-lysyl-[protein] + holo-[ACP] + H(+). The protein operates within protein modification; protein lipoylation via endogenous pathway; protein N(6)-(lipoyl)lysine from octanoyl-[acyl-carrier-protein]: step 1/2. Functionally, catalyzes the transfer of endogenously produced octanoic acid from octanoyl-acyl-carrier-protein onto the lipoyl domains of lipoate-dependent enzymes. Lipoyl-ACP can also act as a substrate although octanoyl-ACP is likely to be the physiological substrate. This Synechococcus sp. (strain JA-3-3Ab) (Cyanobacteria bacterium Yellowstone A-Prime) protein is Octanoyltransferase.